The primary structure comprises 487 residues: Lysophospholipid acyltransferase 5 (487 aa).

The residue at position 2 (Ala2) is an N-acetylalanine. 6 helical membrane passes run 44-64 (LIIS…YLFY), 84-104 (FNFG…FLIL), 111-131 (ITAV…GYYY), 180-200 (GVPS…FLVG), 227-247 (IIPA…YTLL), and 285-305 (VTCW…FNGF). Catalysis depends on residues Asn338 and His374. A run of 3 helical transmembrane segments spans residues 364–384 (GLSL…LVCF), 422–442 (LVQQ…FCLF), and 453–473 (SIYF…PYIH). Positions 484-487 (KKME) match the Di-lysine motif motif.

The protein belongs to the membrane-bound acyltransferase family. As to expression, highly expressed in liver, pancreas and adipose tissue. Very low expression in skeletal muscle and heart. Detected in neutrophils.

The protein localises to the endoplasmic reticulum membrane. The catalysed reaction is a 1-acyl-sn-glycero-3-phosphocholine + an acyl-CoA = a 1,2-diacyl-sn-glycero-3-phosphocholine + CoA. It carries out the reaction a 1-acyl-sn-glycero-3-phosphoethanolamine + an acyl-CoA = a 1,2-diacyl-sn-glycero-3-phosphoethanolamine + CoA. It catalyses the reaction a 1-acyl-sn-glycero-3-phospho-L-serine + an acyl-CoA = a 1,2-diacyl-sn-glycero-3-phospho-L-serine + CoA. The enzyme catalyses (9Z,12Z)-octadecadienoyl-CoA + a 1-acyl-sn-glycero-3-phosphocholine = 1-acyl-2-(9Z,12Z)-octadecadienoyl-sn-glycero-3-phosphocholine + CoA. The catalysed reaction is (5Z,8Z,11Z,14Z)-eicosatetraenoyl-CoA + a 1-acyl-sn-glycero-3-phosphocholine = 1-acyl-2-(5Z,8Z,11Z,14Z-eicosatetraenoyl)-sn-glycero-3-phosphocholine + CoA. It carries out the reaction dodecanoyl-CoA + 1-hexadecanoyl-sn-glycero-3-phosphocholine = 1-hexadecanoyl-2-dodecanoyl-sn-glycero-3-phosphocholine + CoA. It catalyses the reaction octadecanoyl-CoA + 1-hexadecanoyl-sn-glycero-3-phosphocholine = 1-hexadecanoyl-2-octadecanoyl-sn-glycero-3-phosphocholine + CoA. The enzyme catalyses 1-dodecanoyl-sn-glycero-3-phosphocholine + hexadecanoyl-CoA = 1-dodecanoyl-2-hexadecanoyl-sn-glycero-3-phosphocholine + CoA. The catalysed reaction is 1-tetradecanoyl-sn-glycero-3-phosphocholine + hexadecanoyl-CoA = 1-tetradecanoyl-2-hexadecanoyl-sn-glycero-3-phosphocholine + CoA. It carries out the reaction 1-hexadecanoyl-sn-glycero-3-phosphocholine + hexadecanoyl-CoA = 1,2-dihexadecanoyl-sn-glycero-3-phosphocholine + CoA. It catalyses the reaction 1-octadecanoyl-sn-glycero-3-phosphocholine + hexadecanoyl-CoA = 1-octadecanoyl-2-hexadecanoyl-sn-glycero-3-phosphocholine + CoA. The enzyme catalyses 1-(9Z-octadecenoyl)-sn-glycero-3-phosphocholine + hexadecanoyl-CoA = 1-(9Z-octadecenoyl)-2-hexadecanoyl-sn-glycero-3-phosphocholine + CoA. The catalysed reaction is (9Z)-hexadecenoyl-CoA + 1-hexadecanoyl-sn-glycero-3-phosphocholine = 1-hexadecanoyl-2-(9Z-hexadecenoyl)-sn-glycero-3-phosphocholine + CoA. It carries out the reaction 1-hexadecanoyl-sn-glycero-3-phosphocholine + (9Z)-octadecenoyl-CoA = 1-hexadecanoyl-2-(9Z-octadecenoyl)-sn-glycero-3-phosphocholine + CoA. It catalyses the reaction (9Z,12Z)-octadecadienoyl-CoA + 1-hexadecanoyl-sn-glycero-3-phosphocholine = 1-hexadecanoyl-2-(9Z,12Z-octadecadienoyl)-sn-glycero-3-phosphocholine + CoA. The enzyme catalyses 1-dodecanoyl-sn-glycero-3-phosphocholine + (5Z,8Z,11Z,14Z)-eicosatetraenoyl-CoA = 1-dodecanoyl-2-(5Z,8Z,11Z,14Z)-eicosatetraenoyl-sn-glycero-3-phosphocholine + CoA. The catalysed reaction is (5Z,8Z,11Z,14Z)-eicosatetraenoyl-CoA + 1-hexadecanoyl-sn-glycero-3-phosphocholine = 1-hexadecanoyl-2-(5Z,8Z,11Z,14Z-eicosatetraenoyl)-sn-glycero-3-phosphocholine + CoA. It carries out the reaction 1-octadecanoyl-sn-glycero-3-phosphocholine + (5Z,8Z,11Z,14Z)-eicosatetraenoyl-CoA = 1-octadecanoyl-2-(5Z,8Z,11Z,14Z-eicosatetraenoyl)-sn-glycero-3-phosphocholine + CoA. It catalyses the reaction 1-eicosanoyl-sn-glycero-3-phosphocholine + (5Z,8Z,11Z,14Z)-eicosatetraenoyl-CoA = 1-eicosanoyl-2-(5Z,8Z,11Z,14Z)-eicosatetraenoyl-sn-glycero-3-phosphocholine + CoA. The enzyme catalyses 1-(9Z-octadecenoyl)-sn-glycero-3-phosphocholine + (9Z)-octadecenoyl-CoA = 1,2-di-(9Z-octadecenoyl)-sn-glycero-3-phosphocholine + CoA. The catalysed reaction is 1-(9Z-octadecenoyl)-sn-glycero-3-phosphocholine + (9Z,12Z)-octadecadienoyl-CoA = 1-(9Z)-octadecenoyl-2-(9Z,12Z)-octadecadienoyl-sn-glycero-3-phosphocholine + CoA. It carries out the reaction 1-(9Z-octadecenoyl)-sn-glycero-3-phosphocholine + (5Z,8Z,11Z,14Z)-eicosatetraenoyl-CoA = 1-(9Z)-octadecenoyl-2-(5Z,8Z,11Z,14Z)-icosatetraenoyl-sn-glycero-3-phosphocholine + CoA. It catalyses the reaction a 1-acyl-sn-glycero-3-phosphoethanolamine + (9Z,12Z)-octadecadienoyl-CoA = 1-acyl-2-(9Z,12Z)-octadecadienoyl-sn-glycero-3-phosphoethanolamine + CoA. The enzyme catalyses 1-(9Z-octadecenoyl)-sn-glycero-3-phosphoethanolamine + (9Z,12Z)-octadecadienoyl-CoA = 1-(9Z)-octadecenoyl-2-(9Z,12Z)-octadecadienoyl-sn-glycero-3-phosphoethanolamine + CoA. The catalysed reaction is 1-(10Z-heptadecenoyl)-sn-glycero-3-phosphoethanolamine + (9Z,12Z)-octadecadienoyl-CoA = 1-(10Z-heptadecenoyl)-2-(9Z,12Z-octadecadienoyl)-sn-glycero-3-phosphoethanolamine + CoA. It carries out the reaction a 1-acyl-sn-glycero-3-phosphoethanolamine + (5Z,8Z,11Z,14Z)-eicosatetraenoyl-CoA = 1-acyl-2-(5Z,8Z,11Z,14Z)-eicosatetraenoyl-sn-glycero-3-phosphoethanolamine + CoA. It catalyses the reaction 1-hexadecanoyl-sn-glycero-3-phosphoethanolamine + (5Z,8Z,11Z,14Z)-eicosatetraenoyl-CoA = 1-hexadecanoyl-2-(5Z,8Z,11Z,14Z-eicosatetraenoyl)-sn-glycero-3-phosphoethanolamine + CoA. The enzyme catalyses 1-(9Z-octadecenoyl)-sn-glycero-3-phosphoethanolamine + (5Z,8Z,11Z,14Z)-eicosatetraenoyl-CoA = 1-(9Z)-octadecenoyl-2-(5Z,8Z,11Z,14Z)-eicosatetraenoyl-sn-glycero-3-phosphoethanolamine + CoA. The catalysed reaction is 1-(10Z-heptadecenoyl)-sn-glycero-3-phosphoethanolamine + (5Z,8Z,11Z,14Z)-eicosatetraenoyl-CoA = 1-(10Z-heptadecenoyl)-2-(5Z,8Z,11Z,14Z-eicosatetraenoyl)-sn-glycero-3-phosphoethanolamine + CoA. It carries out the reaction a 1-O-(1Z-alkenyl)-sn-glycero-3-phosphoethanolamine + (5Z,8Z,11Z,14Z)-eicosatetraenoyl-CoA = 1-O-(1Z)-alkenyl-2-(5Z,8Z,11Z,14Z)-eicosatetraenoyl-sn-glycero-3-phosphoethanolamine + CoA. It catalyses the reaction a 1-acyl-sn-glycero-3-phospho-L-serine + (9Z,12Z)-octadecadienoyl-CoA = 1-acyl-2-(9Z,12Z-octadecadienoyl)-sn-glycero-3-phospho-L-serine + CoA. The enzyme catalyses a 1-acyl-sn-glycero-3-phospho-L-serine + (5Z,8Z,11Z,14Z)-eicosatetraenoyl-CoA = 1-acyl-2-(5Z,8Z,11Z,14Z-eicosatetraenoyl)-sn-glycero-3-phospho-L-serine + CoA. The catalysed reaction is 1-hexadecanoyl-sn-glycero-3-phospho-L-serine + (9Z)-octadecenoyl-CoA = 1-hexadecanoyl-2-(9Z-octadecenoyl)-sn-glycero-3-phospho-L-serine + CoA. It carries out the reaction 1-(9Z-octadecenoyl)-sn-glycero-3-phospho-L-serine + (9Z)-octadecenoyl-CoA = 1,2-di-(9Z)-octadecenoyl-sn-glycero-3-phospho-L-serine + CoA. It catalyses the reaction 1-hexadecanoyl-sn-glycero-3-phospho-L-serine + (9Z,12Z)-octadecadienoyl-CoA = 1-hexadecanoyl-2-(9Z,12Z-octadecadienoyl)-sn-glycero-3-phospho-L-serine + CoA. The enzyme catalyses 1-(9Z-octadecenoyl)-sn-glycero-3-phospho-L-serine + (9Z,12Z)-octadecadienoyl-CoA = 1-(9Z-octadecenoyl)-2-(9Z,12Z-octadienoyl)-sn-glycero-3-phospho-L-serine + CoA. The catalysed reaction is 1-hexadecanoyl-sn-glycero-3-phospho-L-serine + (5Z,8Z,11Z,14Z)-eicosatetraenoyl-CoA = 1-hexadecanoyl-2-(5Z,8Z,11Z,14Z-eicosatetraenoyl)-sn-glycero-3-phospho-L-serine + CoA. It carries out the reaction 1-(9Z-octadecenoyl)-sn-glycero-3-phospho-L-serine + (5Z,8Z,11Z,14Z)-eicosatetraenoyl-CoA = 1-(9Z-octadecenoyl)-2-(5Z,8Z,11Z,14Z-eicosatetraenoyl)-sn-glycero-3-phospho-L-serine + CoA. It functions in the pathway lipid metabolism; phospholipid metabolism. Its activity is regulated as follows. Activity is inhibited by thimerosal. Functionally, lysophospholipid O-acyltransferase (LPLAT) that catalyzes the reacylation step of the phospholipid remodeling process also known as the Lands cycle. Catalyzes transfer of the fatty acyl chain from fatty acyl-CoA to 1-acyl lysophospholipid to form various classes of phospholipids. Converts 1-acyl lysophosphatidylcholine (LPC) into phosphatidylcholine (PC) (LPCAT activity), 1-acyl lysophosphatidylserine (LPS) into phosphatidylserine (PS) (LPSAT activity) and 1-acyl lysophosphatidylethanolamine (LPE) into phosphatidylethanolamine (PE) (LPEAT activity). Favors polyunsaturated fatty acyl-CoAs as acyl donors compared to saturated fatty acyl-CoAs. Has higher activity for LPC acyl acceptors compared to LPEs and LPSs. Can also transfer the fatty acyl chain from fatty acyl-CoA to 1-O-alkyl lysophospholipid or 1-O-alkenyl lysophospholipid with lower efficiency. Acts as a major LPC O-acyltransferase in liver and intestine. As a component of the liver X receptor/NR1H3 or NR1H2 signaling pathway, mainly catalyzes the incorporation of arachidonate into PCs of endoplasmic reticulum (ER) membranes, increasing membrane dynamics and enabling triacylglycerols transfer to nascent very low-density lipoprotein (VLDL) particles. Promotes processing of sterol regulatory protein SREBF1 in hepatocytes, likely by facilitating the translocation of SREBF1-SCAP complex from ER to the Golgi apparatus. Participates in mechanisms by which the liver X receptor/NR1H3 or NR1H2 signaling pathway counteracts lipid-induced ER stress response and inflammation. Down-regulates hepatic inflammation by limiting arachidonic acid availability for synthesis of inflammatory eicosanoids, such as prostaglandins. In enterocytes, acts as a component of a gut-brain feedback loop that coordinates dietary lipid absorption and food intake. Regulates the abundance of PCs containing linoleate and arachidonate in enterocyte membranes, enabling passive diffusion of fatty acids and cholesterol across the membrane for efficient chylomicron assembly. In the intestinal crypt, acts as a component of dietary-responsive phospholipid-cholesterol axis, regulating the biosynthesis of cholesterol and its mitogenic effects on intestinal stem cells. The protein is Lysophospholipid acyltransferase 5 (LPCAT3) of Homo sapiens (Human).